We begin with the raw amino-acid sequence, 545 residues long: Glucose-6-phosphate isomerase (545 aa).

Residue E351 is the Proton donor of the active site. Residues H382 and K510 contribute to the active site.

Belongs to the GPI family.

Its subcellular location is the cytoplasm. The enzyme catalyses alpha-D-glucose 6-phosphate = beta-D-fructose 6-phosphate. Its pathway is carbohydrate biosynthesis; gluconeogenesis. The protein operates within carbohydrate degradation; glycolysis; D-glyceraldehyde 3-phosphate and glycerone phosphate from D-glucose: step 2/4. In terms of biological role, catalyzes the reversible isomerization of glucose-6-phosphate to fructose-6-phosphate. This is Glucose-6-phosphate isomerase from Shewanella sp. (strain ANA-3).